Reading from the N-terminus, the 104-residue chain is Large ribosomal subunit protein uL23 (104 aa).

It belongs to the universal ribosomal protein uL23 family. As to quaternary structure, part of the 50S ribosomal subunit. Contacts protein L29, and trigger factor when it is bound to the ribosome.

One of the early assembly proteins it binds 23S rRNA. One of the proteins that surrounds the polypeptide exit tunnel on the outside of the ribosome. Forms the main docking site for trigger factor binding to the ribosome. The sequence is that of Large ribosomal subunit protein uL23 from Polynucleobacter asymbioticus (strain DSM 18221 / CIP 109841 / QLW-P1DMWA-1) (Polynucleobacter necessarius subsp. asymbioticus).